We begin with the raw amino-acid sequence, 352 residues long: Gamma-aminobutyric acid-binding protein (352 aa).

The signal sequence occupies residues M1–A28.

It belongs to the bacterial solute-binding protein 1 family.

It localises to the periplasm. Functionally, binds specifically gamma-aminobutyric acid (GABA) with nanomolar affinity. Does not bind structurally related compounds such as 4-aminovaleric acid, spermidine, histamine and butyric acid. In Pseudomonas aeruginosa (strain ATCC 15692 / DSM 22644 / CIP 104116 / JCM 14847 / LMG 12228 / 1C / PRS 101 / PAO1), this protein is Gamma-aminobutyric acid-binding protein.